The chain runs to 227 residues: tRNA (guanine-N(1)-)-methyltransferase (227 aa).

S-adenosyl-L-methionine is bound by residues Gly112 and 131 to 136 (LGDFVL).

Belongs to the RNA methyltransferase TrmD family. In terms of assembly, homodimer.

Its subcellular location is the cytoplasm. It catalyses the reaction guanosine(37) in tRNA + S-adenosyl-L-methionine = N(1)-methylguanosine(37) in tRNA + S-adenosyl-L-homocysteine + H(+). Specifically methylates guanosine-37 in various tRNAs. The sequence is that of tRNA (guanine-N(1)-)-methyltransferase from Trichodesmium erythraeum (strain IMS101).